A 469-amino-acid chain; its full sequence is Calcium-binding mitochondrial carrier protein SCaMC-2-A (469 aa).

Residues 1 to 189 (MLCLCLYVPV…EHLTGMWWRH (189 aa)) lie on the Mitochondrial intermembrane side of the membrane. 3 EF-hand domains span residues 47-80 (TYRR…QDHE), 78-113 (DHEK…LGVH), and 114-149 (ISLK…QPAE). Ca(2+) is bound by residues Asp64, Gln66, and Glu71. Solcar repeat units lie at residues 184-270 (GMWW…IKRV), 278-363 (LGIS…LKNT), and 375-463 (PGVF…IKST). Residues 190-207 (LVSGGGAGAVSRTCTAPL) traverse the membrane as a helical segment. Over 208 to 244 (DRLKVLMQVHGCQGKSMCLMSGLTQMIKEGGVRSLWR) the chain is Mitochondrial matrix. A helical membrane pass occupies residues 245–264 (GNGINVIKIAPETALKFMAY). The Mitochondrial intermembrane portion of the chain corresponds to 265–287 (EQIKRVMGSSQETLGISERFVAG). A helical membrane pass occupies residues 288 to 301 (SLAGVIAQSTIYPM). The Mitochondrial matrix segment spans residues 302 to 337 (EVLKTRLALRKTGQYKGISDCAKHILKTEGMSAFYK). A helical membrane pass occupies residues 338–357 (GYVPNMLGIIPYAGIDLAVY). Residues 358-380 (ETLKNTWLQRYGTENADPGVFVL) lie on the Mitochondrial intermembrane side of the membrane. Residues 381–398 (LACGTVSSTCGQLASYPL) traverse the membrane as a helical segment. Residues 399-437 (ALIRTRMQAQASVEGSSQVSMTGLFKQIMKTEGPTGLYR) are Mitochondrial matrix-facing. Residues 438 to 457 (GLTPNFLKVIPAVSISYVVY) traverse the membrane as a helical segment. The Mitochondrial intermembrane segment spans residues 458-469 (EHIKSTLGVRSR).

Belongs to the mitochondrial carrier (TC 2.A.29) family.

Its subcellular location is the mitochondrion inner membrane. Functionally, calcium-dependent mitochondrial solute carrier. In Danio rerio (Zebrafish), this protein is Calcium-binding mitochondrial carrier protein SCaMC-2-A (slc25a25a).